A 349-amino-acid polypeptide reads, in one-letter code: MIEFDNLTYLHGKPQGTGLLKANPEDFVVVEDLGFEPDGEGEHILVRILKNGCNTRFVADALAKFLKIHTREVSFAGQKDKHAVTEQWLCARVPGKEMPDLSAFQLEGCQVLQYARHKRKLRLGALKGNAFTLVLREVSNRDDVEQRLIDICVKGVPNYFGAQRFGIGGSNLQGALRWAQTNTPVRDRNKRSFWLSAARSAFFNQIVAERLKKADVNQVVDGDALQLAGRGSWFVATTEELAELQRRVNDKELMITAALPGSGEWGTQREALAFEQAAVAEETELQTLLVREKVEAARRAMLLYPQQLSWNWWDDVTVEIRFWLPAGSFATSVVRELINTTGDYAHIAE.

Residue phenylalanine 27 coordinates substrate. The Nucleophile role is filled by aspartate 80. Asparagine 129 lines the substrate pocket. The 149-residue stretch at 155 to 303 folds into the TRUD domain; the sequence is GVPNYFGAQR…VEAARRAMLL (149 aa). Phenylalanine 329 contacts substrate.

It belongs to the pseudouridine synthase TruD family.

The catalysed reaction is uridine(13) in tRNA = pseudouridine(13) in tRNA. Responsible for synthesis of pseudouridine from uracil-13 in transfer RNAs. In Escherichia coli O127:H6 (strain E2348/69 / EPEC), this protein is tRNA pseudouridine synthase D.